A 123-amino-acid polypeptide reads, in one-letter code: Small ribosomal subunit protein uS13 (123 aa).

The interval 96 to 123 (GLPVRGQRTKTNARTRKGPKKTVAGKKK) is disordered.

Belongs to the universal ribosomal protein uS13 family. Part of the 30S ribosomal subunit. Forms a loose heterodimer with protein S19. Forms two bridges to the 50S subunit in the 70S ribosome.

Located at the top of the head of the 30S subunit, it contacts several helices of the 16S rRNA. In the 70S ribosome it contacts the 23S rRNA (bridge B1a) and protein L5 of the 50S subunit (bridge B1b), connecting the 2 subunits; these bridges are implicated in subunit movement. Contacts the tRNAs in the A and P-sites. This chain is Small ribosomal subunit protein uS13, found in Nocardia farcinica (strain IFM 10152).